Consider the following 226-residue polypeptide: Cobalt transport protein CbiM 2 (226 aa).

The next 6 membrane-spanning stretches (helical) occupy residues 6–26, 43–63, 75–95, 107–127, 135–155, and 181–201; these read GFLP…VVAY, MLLG…MPSV, LGAI…VLLF, TLGA…AAVF, FPFG…TYVT, and VFAL…VVVM.

The protein belongs to the CbiM family. In terms of assembly, forms an energy-coupling factor (ECF) transporter complex composed of an ATP-binding protein (A component, CbiO), a transmembrane protein (T component, CbiQ) and 2 possible substrate-capture proteins (S components, CbiM and CbiN) of unknown stoichimetry.

Its subcellular location is the cell inner membrane. Its pathway is cofactor biosynthesis; adenosylcobalamin biosynthesis. Functionally, part of the energy-coupling factor (ECF) transporter complex CbiMNOQ involved in cobalt import. In Pelobacter propionicus (strain DSM 2379 / NBRC 103807 / OttBd1), this protein is Cobalt transport protein CbiM 2.